Consider the following 415-residue polypeptide: Phosphoribosylamine--glycine ligase (415 aa).

The ATP-grasp domain maps to 108–311; that stretch reads KKIMEKYNIP…LMQHIIDLDE (204 aa). 134–191 serves as a coordination point for ATP; it reads IENCELPVVVKKDGLAAGKGVIIADTIEAARSAIEIMYGDEEEGTVVFETFLEGEEFS. Residues Glu-281 and Asn-283 each coordinate Mg(2+).

This sequence belongs to the GARS family. Mg(2+) is required as a cofactor. It depends on Mn(2+) as a cofactor.

The enzyme catalyses 5-phospho-beta-D-ribosylamine + glycine + ATP = N(1)-(5-phospho-beta-D-ribosyl)glycinamide + ADP + phosphate + H(+). It functions in the pathway purine metabolism; IMP biosynthesis via de novo pathway; N(1)-(5-phospho-D-ribosyl)glycinamide from 5-phospho-alpha-D-ribose 1-diphosphate: step 2/2. This Staphylococcus aureus (strain COL) protein is Phosphoribosylamine--glycine ligase.